A 177-amino-acid chain; its full sequence is ATP synthase subunit delta (177 aa).

This sequence belongs to the ATPase delta chain family. F-type ATPases have 2 components, F(1) - the catalytic core - and F(0) - the membrane proton channel. F(1) has five subunits: alpha(3), beta(3), gamma(1), delta(1), epsilon(1). F(0) has three main subunits: a(1), b(2) and c(10-14). The alpha and beta chains form an alternating ring which encloses part of the gamma chain. F(1) is attached to F(0) by a central stalk formed by the gamma and epsilon chains, while a peripheral stalk is formed by the delta and b chains.

The protein resides in the cell inner membrane. F(1)F(0) ATP synthase produces ATP from ADP in the presence of a proton or sodium gradient. F-type ATPases consist of two structural domains, F(1) containing the extramembraneous catalytic core and F(0) containing the membrane proton channel, linked together by a central stalk and a peripheral stalk. During catalysis, ATP synthesis in the catalytic domain of F(1) is coupled via a rotary mechanism of the central stalk subunits to proton translocation. Functionally, this protein is part of the stalk that links CF(0) to CF(1). It either transmits conformational changes from CF(0) to CF(1) or is implicated in proton conduction. This is ATP synthase subunit delta from Salmonella agona (strain SL483).